The chain runs to 229 residues: Heptaprenylglyceryl phosphate synthase (229 aa).

K12 lines the sn-glycerol 1-phosphate pocket. Mg(2+) contacts are provided by D14 and S40. Sn-glycerol 1-phosphate-binding positions include 159–164 (YLEYSG), G189, and 209–210 (GN).

This sequence belongs to the GGGP/HepGP synthase family. Group I subfamily. In terms of assembly, homodimer. Requires Mg(2+) as cofactor.

It carries out the reaction sn-glycerol 1-phosphate + all-trans-heptaprenyl diphosphate = 3-heptaprenyl-sn-glycero-1-phosphate + diphosphate. The protein operates within membrane lipid metabolism; glycerophospholipid metabolism. In terms of biological role, prenyltransferase that catalyzes in vivo the transfer of the heptaprenyl moiety of heptaprenyl pyrophosphate (HepPP; 35 carbon atoms) to the C3 hydroxyl of sn-glycerol-1-phosphate (G1P), producing heptaprenylglyceryl phosphate (HepGP). This reaction is an ether-bond-formation step in the biosynthesis of archaea-type G1P-based membrane lipids found in Bacillales. This is Heptaprenylglyceryl phosphate synthase from Bacillus cereus (strain ATCC 10987 / NRS 248).